The chain runs to 1876 residues: 1,3-beta-glucan synthase component FKS1 (1876 aa).

Polar residues-rich tracts occupy residues 1–25 (MNTDQQPYQGQTDYTQGPGNGQSQE) and 60–71 (QPPNESYDQDYT). A disordered region spans residues 1–108 (MNTDQQPYQG…PGTPGYDSYG (108 aa)). Over 1–454 (MNTDQQPYQG…WLHLVTNFNR (454 aa)) the chain is Cytoplasmic. Residue Lys259 forms a Glycyl lysine isopeptide (Lys-Gly) (interchain with G-Cter in ubiquitin) linkage. Thr269 and Thr272 each carry phosphothreonine. Residues Lys275 and Lys386 each participate in a glycyl lysine isopeptide (Lys-Gly) (interchain with G-Cter in ubiquitin) cross-link. A helical transmembrane segment spans residues 455-475 (IWVMHISIFWMYFAYNSPTFY). The Extracellular segment spans residues 476-492 (THNYQQLVDNQPLAAYK). Residues 493 to 513 (WASCALGGTVASLIQIVATLC) form a helical membrane-spanning segment. The Cytoplasmic segment spans residues 514 to 531 (EWSFVPRKWAGAQHLSRR). Residues 532-552 (FWFLCIIFGINLGPIIFVFAY) traverse the membrane as a helical segment. Topologically, residues 553–563 (DKDTVYSTAAH) are extracellular. The chain crosses the membrane as a helical span at residues 564–584 (VVAAVMFFVAVATIIFFSIMP). Topologically, residues 585-621 (LGGLFTSYMKKSTRRYVASQTFTAAFAPLHGLDRWMS) are cytoplasmic. The helical transmembrane segment at 622–642 (YLVWVTVFAAKYSESYYFLVL) threads the bilayer. Over 643–678 (SLRDPIRILSTTAMRCTGEYWWGAVLCKVQPKIVLG) the chain is Extracellular. A helical transmembrane segment spans residues 679-699 (LVIATDFILFFLDTYLWYIIV). The Cytoplasmic segment spans residues 700–1358 (NTIFSVGKSF…QPAVDWVRRY (659 aa)). Glycyl lysine isopeptide (Lys-Gly) (interchain with G-Cter in ubiquitin) cross-links involve residues Lys910 and Lys915. A helical membrane pass occupies residues 1359 to 1379 (TLSIFIVFWIAFVPIVVQELI). Topologically, residues 1380–1444 (ERGLWKATQR…RIPFSILYSR (65 aa)) are extracellular. The helical transmembrane segment at 1445–1465 (FAGSAIYMGARSMLMLLFGTV) threads the bilayer. The Cytoplasmic segment spans residues 1466 to 1469 (AHWQ). Residues 1470-1490 (APLLWFWASLSSLIFAPFVFN) traverse the membrane as a helical segment. Residues 1491–1560 (PHQFAWEDFF…DASRAHRTNL (70 aa)) are Extracellular-facing. Residues Lys1539 and Lys1547 each participate in a glycyl lysine isopeptide (Lys-Gly) (interchain with G-Cter in ubiquitin) cross-link. The chain crosses the membrane as a helical span at residues 1561-1581 (IMAEIIPCAIYAAGCFIAFTF). At 1582–1601 (INAQTGVKTTDDDRVNSVLR) the chain is on the cytoplasmic side. The chain crosses the membrane as a helical span at residues 1602–1622 (IIICTLAPIAVNLGVLFFCMG). The Extracellular portion of the chain corresponds to 1623–1643 (MSCCSGPLFGMCCKKTGSVMA). The helical transmembrane segment at 1644-1664 (GIAHGVAVIVHIAFFIVMWVL) threads the bilayer. Topologically, residues 1665–1672 (ESFNFVRM) are cytoplasmic. The helical transmembrane segment at 1673 to 1695 (LIGVVTCIQCQRLIFHCMTALML) threads the bilayer. The Extracellular portion of the chain corresponds to 1696-1802 (TREFKNDHAN…RKRMVKKYCS (107 aa)). The chain crosses the membrane as a helical span at residues 1803 to 1823 (LYFLVLAIFAGCIIGPAVASA). Topologically, residues 1824 to 1876 (KIHKHIGDSLDGVVHNLFQPINTTNNDTGSQMSTYQSHYYTHTPSLKTWSTIK) are cytoplasmic.

It belongs to the glycosyltransferase 48 family. Component of the 1,3-beta-glucan synthase (GS) complex, composed of two alternate catalytic subunits FKS1 or GSC2, and a regulatory subunit RHO1. Interacts with RHO1, which is a GTP-binding protein.

The protein localises to the mitochondrion. The protein resides in the cell membrane. The enzyme catalyses [(1-&gt;3)-beta-D-glucosyl](n) + UDP-alpha-D-glucose = [(1-&gt;3)-beta-D-glucosyl](n+1) + UDP + H(+). In terms of biological role, alternate catalytic subunit of the 1,3-beta-glucan synthase (GS) complex. Synthesizes 1,3-beta-glucan, a major structural component of the yeast cell wall. Involved in cell wall synthesis, maintenance and remodeling. This chain is 1,3-beta-glucan synthase component FKS1 (FKS1), found in Saccharomyces cerevisiae (strain ATCC 204508 / S288c) (Baker's yeast).